A 256-amino-acid polypeptide reads, in one-letter code: Acetylglutamate kinase (256 aa).

Substrate is bound by residues 40–41, Arg-62, and Asn-154; that span reads GG.

This sequence belongs to the acetylglutamate kinase family. ArgB subfamily.

Its subcellular location is the cytoplasm. The catalysed reaction is N-acetyl-L-glutamate + ATP = N-acetyl-L-glutamyl 5-phosphate + ADP. The protein operates within amino-acid biosynthesis; L-arginine biosynthesis; N(2)-acetyl-L-ornithine from L-glutamate: step 2/4. Functionally, catalyzes the ATP-dependent phosphorylation of N-acetyl-L-glutamate. The protein is Acetylglutamate kinase of Staphylococcus aureus (strain MRSA252).